A 361-amino-acid polypeptide reads, in one-letter code: tRNA-specific 2-thiouridylase MnmA (361 aa).

ATP-binding positions include 10–17 (GMSGGVDS) and methionine 36. The Nucleophile role is filled by cysteine 104. A disulfide bond links cysteine 104 and cysteine 202. Glycine 128 is an ATP binding site. The tract at residues 152-154 (KDQ) is interaction with tRNA. Catalysis depends on cysteine 202, which acts as the Cysteine persulfide intermediate. An interaction with tRNA region spans residues 308–309 (RY).

Belongs to the MnmA/TRMU family.

It localises to the cytoplasm. The enzyme catalyses S-sulfanyl-L-cysteinyl-[protein] + uridine(34) in tRNA + AH2 + ATP = 2-thiouridine(34) in tRNA + L-cysteinyl-[protein] + A + AMP + diphosphate + H(+). Its function is as follows. Catalyzes the 2-thiolation of uridine at the wobble position (U34) of tRNA, leading to the formation of s(2)U34. In Clostridioides difficile (strain 630) (Peptoclostridium difficile), this protein is tRNA-specific 2-thiouridylase MnmA.